Consider the following 251-residue polypeptide: Ubiquinone/menaquinone biosynthesis C-methyltransferase UbiE (251 aa).

Residues Thr74, Asp92, and Ser132 each coordinate S-adenosyl-L-methionine.

It belongs to the class I-like SAM-binding methyltransferase superfamily. MenG/UbiE family.

It carries out the reaction a 2-demethylmenaquinol + S-adenosyl-L-methionine = a menaquinol + S-adenosyl-L-homocysteine + H(+). The enzyme catalyses a 2-methoxy-6-(all-trans-polyprenyl)benzene-1,4-diol + S-adenosyl-L-methionine = a 5-methoxy-2-methyl-3-(all-trans-polyprenyl)benzene-1,4-diol + S-adenosyl-L-homocysteine + H(+). Its pathway is quinol/quinone metabolism; menaquinone biosynthesis; menaquinol from 1,4-dihydroxy-2-naphthoate: step 2/2. It functions in the pathway cofactor biosynthesis; ubiquinone biosynthesis. Methyltransferase required for the conversion of demethylmenaquinol (DMKH2) to menaquinol (MKH2) and the conversion of 2-polyprenyl-6-methoxy-1,4-benzoquinol (DDMQH2) to 2-polyprenyl-3-methyl-6-methoxy-1,4-benzoquinol (DMQH2). The chain is Ubiquinone/menaquinone biosynthesis C-methyltransferase UbiE from Rubrivivax gelatinosus (strain NBRC 100245 / IL144).